The primary structure comprises 414 residues: Probable cytochrome P450 127A1 (414 aa).

Position 364 (Cys364) interacts with heme.

Belongs to the cytochrome P450 family. It depends on heme as a cofactor.

In terms of biological role, cytochromes P450 are a group of heme-thiolate monooxygenases. They oxidize a variety of structurally unrelated compounds, including steroids, fatty acids, and xenobiotics. In Sinorhizobium fredii (strain NBRC 101917 / NGR234), this protein is Probable cytochrome P450 127A1 (cyp127A1).